The primary structure comprises 235 residues: Large ribosomal subunit protein uL1 (235 aa).

Belongs to the universal ribosomal protein uL1 family. As to quaternary structure, part of the 50S ribosomal subunit.

Functionally, binds directly to 23S rRNA. The L1 stalk is quite mobile in the ribosome, and is involved in E site tRNA release. Its function is as follows. Protein L1 is also a translational repressor protein, it controls the translation of the L11 operon by binding to its mRNA. The sequence is that of Large ribosomal subunit protein uL1 from Paenarthrobacter aurescens (strain TC1).